The primary structure comprises 705 residues: Elongation factor G (705 aa).

The 282-residue stretch at 8 to 289 (VNYRNIGISA…TVINYLPSPK (282 aa)) folds into the tr-type G domain. Residues 17–24 (AHIDAGKT), 88–92 (DTPGH), and 142–145 (NKMD) each bind GTP.

This sequence belongs to the TRAFAC class translation factor GTPase superfamily. Classic translation factor GTPase family. EF-G/EF-2 subfamily.

The protein localises to the cytoplasm. Catalyzes the GTP-dependent ribosomal translocation step during translation elongation. During this step, the ribosome changes from the pre-translocational (PRE) to the post-translocational (POST) state as the newly formed A-site-bound peptidyl-tRNA and P-site-bound deacylated tRNA move to the P and E sites, respectively. Catalyzes the coordinated movement of the two tRNA molecules, the mRNA and conformational changes in the ribosome. The protein is Elongation factor G of Wigglesworthia glossinidia brevipalpis.